The following is an 855-amino-acid chain: MASFPETDFQICLLCKEMCGSPAPLSSNSSASSSSSQTSTSSAGGGGPGAAARRLHVLPCLHAFCRPCLEAHRLPAPGGAGPAEALKLRCPVCDQKVVLAEAAGMDALPSSAFLLSNLLDAVVATAEEPPPKNGRAGGGPGGAGGHSNHRHHAHHPAQRAAAPAPQPPPGPAASPGSLLMRRPHGCSSCDEGNAASSRCLDCQEHLCDNCVRAHQRVRLTKDHYIERGPPGPAAASAAQQLGLGPPFAGAPFSILSVFPERLGFCQHHDDEVLHLYCDTCSVPICRECTLGRHGGHSFAYLQDALQDSRALTIQLLADAQQGRQALQLSIEQAQTVAEQVEMKAKVVQSEVKAVTARHKKALEDRECELLWKVEKIRQVKAKSLFLQVEKLRQSLSKLESTISAVQQVLEEGRALDILLARDRMLAQVQELKTIRGLLQPQEDDRIMFTPPDQALYLALKSIGFVSSGAFAPLTKATGDGIKRALQGKVASFTVMGYDHDGEPRHSGGDLMSVVVLGPDGNLFGAEVSDQQNGTYIVSYRPQLEGEHLVSVTLYNQHIENSPFKVVVKSGRSYVGIGLPGLSFGSEGDGEGKLCRPWGVSVDKEGFIIVADRSNNRIQVFKPCGSFHHKFGTLGSRPGQFDRPAGVACDASRRIIVADKDNHRIQIFTFEGQFLLKFGEKGTKNGQFNYPWDVAVNSEGKILVSDTRNHRIQLFGPDGVFLNKYGFEGSLWKHFDSPRGVAFNNEGHLVVTDFNNHRLLVIHPDCQSARFLGSEGSGNGQFLRPQGVAVDQEGRIIVADSRNHRVQMFEANGSFLCKFGAQGSGFGQMDRPSGIAVTPDGLIVVVDFGNNRILIF.

Ala2 carries the post-translational modification N-acetylalanine. The segment at 12-94 (CLLCKEMCGS…ALKLRCPVCD (83 aa)) adopts an RING-type zinc-finger fold. The segment covering 26-42 (SSNSSASSSSSQTSTSS) has biased composition (low complexity). Disordered regions lie at residues 26 to 48 (SSNS…GGGP) and 127 to 177 (EEPP…SPGS). Positions 135–145 (RAGGGPGGAGG) are enriched in gly residues. Positions 147–157 (SNHRHHAHHPA) are enriched in basic residues. The segment at 181–228 (RRPHGCSSCDEGNAASSRCLDCQEHLCDNCVRAHQRVRLTKDHYIERG) adopts a B box-type 1; atypical zinc-finger fold. Residues 260-301 (ERLGFCQHHDDEVLHLYCDTCSVPICRECTLGRHGGHSFAYL) form a B box-type 2 zinc finger. Positions 265, 268, 288, and 293 each coordinate Zn(2+). Coiled-coil stretches lie at residues 314-352 (QLLA…SEVK) and 378-411 (QVKA…VLEE). One copy of the Filamin repeat lies at 466-567 (SSGAFAPLTK…IENSPFKVVV (102 aa)). NHL repeat units follow at residues 580–623 (GLSF…FKPC), 627–670 (HHKF…FTFE), 674–717 (LLKF…FGPD), 721–764 (LNKY…IHPD), 768–811 (ARFL…FEAN), and 815–855 (LCKF…ILIF).

It belongs to the TRIM/RBCC family. In terms of assembly, interacts (via NHL repeats) with AGO2; the interaction increases in presence of RNA. Interacts with HSP90AA1. Interacts (via NHL repeats) with MOV10, PABPC1, PUM1, PUM2, STAU2, XRN1 and XRN2 in an RNA-dependent manner. Interacts with SHCBP1; leading to enhance its stability. Autoubiquitinated. As to expression, highly expressed in undifferentiated embryonic stem cells (ESCs). Expressed in the epiblast and in interfollicular epidermal stem cells during early development. Also expressed in male germ cells and in the reproductive tract. Highly expressed in neuroepithelial cells, and its expression declines as neurogenesis proceeds (at protein level). Expressed in ependymal cells of the brain.

The protein resides in the cytoplasm. Its subcellular location is the P-body. It carries out the reaction S-ubiquitinyl-[E2 ubiquitin-conjugating enzyme]-L-cysteine + [acceptor protein]-L-lysine = [E2 ubiquitin-conjugating enzyme]-L-cysteine + N(6)-ubiquitinyl-[acceptor protein]-L-lysine.. The protein operates within protein modification; protein ubiquitination. In terms of biological role, E3 ubiquitin-protein ligase that cooperates with the microRNAs (miRNAs) machinery and promotes embryonic stem cells proliferation and maintenance. Binds to miRNAs and associates with AGO2, participating in post-transcriptional repression of transcripts such as CDKN1A. Facilitates the G1-S transition to promote rapid embryonic stem cell self-renewal by repressing CDKN1A expression. In addition, participates in post-transcriptional mRNA repression in a miRNA independent mechanism. Required to maintain proliferation and prevent premature differentiation of neural progenitor cells during early neural development: positively regulates FGF signaling by controlling the stability of SHCBP1. Specific regulator of miRNA biogenesis. miRNA Binds MIR29A hairpin and postranscriptionally modulates MIR29A levels, which indirectly regulates TET proteins expression. The polypeptide is E3 ubiquitin-protein ligase TRIM71 (Trim71) (Mus musculus (Mouse)).